The sequence spans 509 residues: ATP synthase subunit alpha (509 aa).

Residue 169 to 176 (GDRQTGKT) participates in ATP binding.

It belongs to the ATPase alpha/beta chains family. F-type ATPases have 2 components, CF(1) - the catalytic core - and CF(0) - the membrane proton channel. CF(1) has five subunits: alpha(3), beta(3), gamma(1), delta(1), epsilon(1). CF(0) has three main subunits: a(1), b(2) and c(9-12). The alpha and beta chains form an alternating ring which encloses part of the gamma chain. CF(1) is attached to CF(0) by a central stalk formed by the gamma and epsilon chains, while a peripheral stalk is formed by the delta and b chains.

The protein resides in the cell inner membrane. It catalyses the reaction ATP + H2O + 4 H(+)(in) = ADP + phosphate + 5 H(+)(out). Functionally, produces ATP from ADP in the presence of a proton gradient across the membrane. The alpha chain is a regulatory subunit. The protein is ATP synthase subunit alpha of Rhizobium meliloti (strain 1021) (Ensifer meliloti).